A 261-amino-acid polypeptide reads, in one-letter code: Ribosome-inactivating protein PD-L1/PD-L2 (261 aa).

Residues asparagine 10 and asparagine 43 are each glycosylated (N-linked (GlcNAc...) asparagine; in PD-L1 and PD-L2). Disulfide bonds link cysteine 34-cysteine 258 and cysteine 84-cysteine 105. The active site involves tyrosine 72. Valine 73 contacts substrate. Substrate is bound at residue serine 120. Residues tyrosine 122, glutamate 175, and arginine 178 contribute to the active site. Arginine 178 provides a ligand contact to substrate. The N-linked (GlcNAc...) asparagine; in PD-L1 glycan is linked to asparagine 255.

The protein belongs to the ribosome-inactivating protein family. Type 1 RIP subfamily. Post-translationally, N-glycosylated. Loss of glycosylation does not affect DNA-cleaving ability. Loss of glycosylation does not affect protein synthesis inhibition, but increases adenine polynucleotide glycosidase activity likely as a consequence of the increased accessibility of substrates to the active site pocket in the absence of glycosylation. As to expression, expressed in leaves (at protein level).

The catalysed reaction is Endohydrolysis of the N-glycosidic bond at one specific adenosine on the 28S rRNA.. Functionally, inhibits protein synthesis. Has adenine polynucleotide glycosidase activity on herring sperm (hs)DNA and poly(A) substrates. Cleaves supercoiled pBR322 dsDNA. This Phytolacca dioica (Bella sombra tree) protein is Ribosome-inactivating protein PD-L1/PD-L2.